The primary structure comprises 872 residues: Alanine--tRNA ligase (872 aa).

Zn(2+)-binding residues include H567, H571, C669, and H673.

The protein belongs to the class-II aminoacyl-tRNA synthetase family. It depends on Zn(2+) as a cofactor.

The protein resides in the cytoplasm. It catalyses the reaction tRNA(Ala) + L-alanine + ATP = L-alanyl-tRNA(Ala) + AMP + diphosphate. Catalyzes the attachment of alanine to tRNA(Ala) in a two-step reaction: alanine is first activated by ATP to form Ala-AMP and then transferred to the acceptor end of tRNA(Ala). Also edits incorrectly charged Ser-tRNA(Ala) and Gly-tRNA(Ala) via its editing domain. The sequence is that of Alanine--tRNA ligase from Streptococcus pneumoniae serotype 4 (strain ATCC BAA-334 / TIGR4).